Consider the following 152-residue polypeptide: Probable flagellum biosynthesis repressor protein FlbT (152 aa).

Belongs to the FlbT family.

In terms of biological role, has a post-transcriptional repressor function in flagellum biogenesis. Associates with the 5'-UTR of fljK mRNA and promotes its degradation. The chain is Probable flagellum biosynthesis repressor protein FlbT from Brucella abortus (strain S19).